Here is a 306-residue protein sequence, read N- to C-terminus: Putative B3 domain-containing protein Os03g0621600 (306 aa).

The TF-B3 1 DNA-binding region spans 29 to 122 (FSVLCLMPIM…QLKTLIFDSS (94 aa)). The disordered stretch occupies residues 139 to 166 (YDIAMRNSQDEKKKRKQRDISRQGTVKP). Positions 210–306 (GYVMNNSSIH…VMDVHIIRRK (97 aa)) form a DNA-binding region, TF-B3 2.

The protein localises to the nucleus. This is Putative B3 domain-containing protein Os03g0621600 from Oryza sativa subsp. japonica (Rice).